Here is a 60-residue protein sequence, read N- to C-terminus: MKNTILILFTAFIALLGFFGMSAEALADPLAEPLADPNAEADPEALKLKSIVSWAKKVLG.

The signal sequence occupies residues 1 to 27; it reads MKNTILILFTAFIALLGFFGMSAEALA. AXPX repeat units follow at residues 27 to 30, 31 to 34, 35 to 38, and 41 to 44; these read ADPL, AEPL, ADPN, and ADPE. A propeptide spanning residues 28–45 is cleaved from the precursor; that stretch reads DPLAEPLADPNAEADPEA. The residue at position 59 (Leu59) is a Leucine amide.

It belongs to the MCD family. Mastoparan subfamily. As to expression, expressed by the venom gland.

Its subcellular location is the secreted. It localises to the target cell membrane. Functionally, antimicrobial and mast cell degranulating peptide. Has broad spectrum antibacterial activity against both Gram-positive (S.aureus MIC=96-128 ug/ml, S.xylosus MIC=2 ug/ml, S.alactolyticus MIC=32 ug/ml, and S.choleraesuis MIC=32 ug/ml) and Gram-negative bacteria (C.koseri MIC=6 ug/ml, E.coli MIC=3-16 ug/ml, K.pneumoniae MIC=128 ug/ml, P.aerugiosa MIC=128 ug/ml, S.typhimurium MIC=64 ug/ml, V.parahamelytics MIC=32 ug/ml, and S.enterica), as well as on fungi (C.albicans, C.glabrata, and C.neoformans). Does not show antimicrobial activity against S.mutans. Affects membrane permeability of E.coli. Also acts as a mast cell degranulating peptide, that causes liberation of histamine from rat peritoneal mast cells. Its mast cell degranulation activity may be related to the activation of G-protein coupled receptors in mast cells as well as interaction with other proteins located in cell endosomal membranes in the mast cells. Whether this peptide shows hemolytic activities is controversial, as Lin et al., 2011 and Ho et al., 1991 found a hemolytic activity on sheep, chicken and human erythrocytes, whereas Kim et al., 2016 found no hemolytic activity on human erythrocytes. In vivo, induces edema in the rat paw. The chain is Mastoparan-B from Vespa basalis (Hornet).